A 24-amino-acid chain; its full sequence is Antimicrobial peptide PGQ (24 aa).

Belongs to the gastrin/cholecystokinin family. Magainin subfamily. Is synthesized in the stomach and stored in a novel granular multinucleated cell in the gastric mucosa. It is stored as active, processed peptides in large granules within the granular gland secretions of the skin.

It is found in the secreted. Its function is as follows. Antimicrobial peptide. The sequence is that of Antimicrobial peptide PGQ (pgq) from Xenopus laevis (African clawed frog).